Reading from the N-terminus, the 338-residue chain is Ketol-acid reductoisomerase (NADP(+)) (338 aa).

Positions 1–181 (MTVYYDKDCN…GGGRTAIIET (181 aa)) constitute a KARI N-terminal Rossmann domain. NADP(+) is bound by residues 24–27 (FGSQ), arginine 47, serine 52, and 82–85 (DENQ). Histidine 107 is an active-site residue. Glycine 133 provides a ligand contact to NADP(+). Residues 182-327 (TFKDETETDL…VKLRTMMPWI (146 aa)) form the KARI C-terminal knotted domain. 4 residues coordinate Mg(2+): aspartate 190, glutamate 194, glutamate 226, and glutamate 230. Residue serine 251 coordinates substrate.

The protein belongs to the ketol-acid reductoisomerase family. Mg(2+) serves as cofactor.

The enzyme catalyses (2R)-2,3-dihydroxy-3-methylbutanoate + NADP(+) = (2S)-2-acetolactate + NADPH + H(+). The catalysed reaction is (2R,3R)-2,3-dihydroxy-3-methylpentanoate + NADP(+) = (S)-2-ethyl-2-hydroxy-3-oxobutanoate + NADPH + H(+). Its pathway is amino-acid biosynthesis; L-isoleucine biosynthesis; L-isoleucine from 2-oxobutanoate: step 2/4. It participates in amino-acid biosynthesis; L-valine biosynthesis; L-valine from pyruvate: step 2/4. In terms of biological role, involved in the biosynthesis of branched-chain amino acids (BCAA). Catalyzes an alkyl-migration followed by a ketol-acid reduction of (S)-2-acetolactate (S2AL) to yield (R)-2,3-dihydroxy-isovalerate. In the isomerase reaction, S2AL is rearranged via a Mg-dependent methyl migration to produce 3-hydroxy-3-methyl-2-ketobutyrate (HMKB). In the reductase reaction, this 2-ketoacid undergoes a metal-dependent reduction by NADPH to yield (R)-2,3-dihydroxy-isovalerate. In Sulfurimonas denitrificans (strain ATCC 33889 / DSM 1251) (Thiomicrospira denitrificans (strain ATCC 33889 / DSM 1251)), this protein is Ketol-acid reductoisomerase (NADP(+)).